The primary structure comprises 232 residues: Uracil-DNA glycosylase (232 aa).

Residue D70 is the Proton acceptor of the active site.

Belongs to the uracil-DNA glycosylase (UDG) superfamily. UNG family.

Its subcellular location is the cytoplasm. It catalyses the reaction Hydrolyzes single-stranded DNA or mismatched double-stranded DNA and polynucleotides, releasing free uracil.. Functionally, excises uracil residues from the DNA which can arise as a result of misincorporation of dUMP residues by DNA polymerase or due to deamination of cytosine. This is Uracil-DNA glycosylase from Campylobacter fetus subsp. fetus (strain 82-40).